The sequence spans 263 residues: Homeobox protein CDX-1 (263 aa).

Residues 47 to 108 (PGINSDPHHG…VQPPGSGLLP (62 aa)) form a disordered region. Over residues 82–97 (SSANPTQIAFSPSDYN) the composition is skewed to polar residues. The segment at residues 150 to 209 (KDKYRVVYTDHQRLELEKEFHYSRYITIRRKAELAAALGLTERQVKIWFQNRRAKERKVN) is a DNA-binding region (homeobox). Positions 153 to 174 (YRVVYTDHQRLELEKEFHYSRY) are interaction with DNA. Residues 192–203 (RQVKIWFQNRRA) form an interaction with 5-mCpG DNA region. Basic residues predominate over residues 204 to 213 (KERKVNKKKM). Residues 204–263 (KERKVNKKKMQQQSQQASTTTPTPPSVGTTAGMGGLCSSSSSNSNLVSPSSMPIKEEYLS) are disordered. Composition is skewed to low complexity over residues 214–233 (QQQS…VGTT) and 241–254 (SSSS…SPSS).

This sequence belongs to the Caudal homeobox family.

It is found in the nucleus. Its function is as follows. Plays a role in transcriptional regulation. Involved in activated KRAS-mediated transcriptional activation of PRKD1. Binds to the PRKD1 promoter. Could play a role in the terminal differentiation of the intestine. Binds preferentially to methylated DNA. This chain is Homeobox protein CDX-1 (cdx1), found in Xenopus laevis (African clawed frog).